The following is a 220-amino-acid chain: Ribosomal RNA small subunit methyltransferase G (220 aa).

S-adenosyl-L-methionine contacts are provided by residues Gly82, Leu87, 105 to 107 (DST), 133 to 134 (VE), and Arg147.

This sequence belongs to the methyltransferase superfamily. RNA methyltransferase RsmG family.

It localises to the cytoplasm. Functionally, specifically methylates the N7 position of a guanine in 16S rRNA. The protein is Ribosomal RNA small subunit methyltransferase G of Chlorobium limicola (strain DSM 245 / NBRC 103803 / 6330).